Reading from the N-terminus, the 754-residue chain is 1,4-alpha-glucan branching enzyme GlgB (754 aa).

The active-site Nucleophile is the Asp-431. Glu-484 serves as the catalytic Proton donor.

It belongs to the glycosyl hydrolase 13 family. GlgB subfamily. Monomer.

The enzyme catalyses Transfers a segment of a (1-&gt;4)-alpha-D-glucan chain to a primary hydroxy group in a similar glucan chain.. Its pathway is glycan biosynthesis; glycogen biosynthesis. Its function is as follows. Catalyzes the formation of the alpha-1,6-glucosidic linkages in glycogen by scission of a 1,4-alpha-linked oligosaccharide from growing alpha-1,4-glucan chains and the subsequent attachment of the oligosaccharide to the alpha-1,6 position. In Prochlorococcus marinus (strain MIT 9215), this protein is 1,4-alpha-glucan branching enzyme GlgB.